A 332-amino-acid polypeptide reads, in one-letter code: MGRVKLEIKRIENTTNRQVTFSKRRNGLIKKAYELSILCDIDIALLMFSPSDRLSLFSGKTRIEDVFSRYINLSDQERENALVFPDQSRRPDFQSKEYLLRTLQQLKAENDIALQLTNPTAINSDVEELEHEVYKLQQQLLMAEEELRKYEPDPIRFTTMEEYETCEKQLMDTLTRVNQRREHILSQDQLSSYEASALQQQQSMGGPFGNDVVGGWLTENGPNEAHLFDASAHSAMYETLLQGSSSSSNQNNIMGESNVSNHNGDMFQEWAQAYNSTTAHNPSTLFPPMQHQHGLVVDPNIEEIEIPVMKKDAQADHEVSDYDIRMPQLSSQ.

The 61-residue stretch at M1–T61 folds into the MADS-box domain. Residues T120–E151 are a coiled coil.

In terms of assembly, forms a heterodimer with AGL30. In terms of tissue distribution, expressed in pollen.

It localises to the nucleus. Its function is as follows. Probable transcription factor that forms a heterodimer with the MADS-box protein AGL30 and is involved in the regulation of pollen maturation at the late stages of pollen development and pollen tube growth. This is Agamous-like MADS-box protein AGL66 from Arabidopsis thaliana (Mouse-ear cress).